A 480-amino-acid chain; its full sequence is Adenosylmethionine-8-amino-7-oxononanoate aminotransferase (480 aa).

126-127 serves as a coordination point for pyridoxal 5'-phosphate; that stretch reads GS. Tyrosine 160 provides a ligand contact to substrate. Aspartate 270 serves as a coordination point for pyridoxal 5'-phosphate. Residue lysine 314 is modified to N6-(pyridoxal phosphate)lysine. Residue glycine 350 participates in substrate binding. 351–352 is a binding site for pyridoxal 5'-phosphate; it reads PT. A substrate-binding site is contributed by arginine 441.

Belongs to the class-III pyridoxal-phosphate-dependent aminotransferase family. BioA subfamily. The cofactor is pyridoxal 5'-phosphate.

It catalyses the reaction (8S)-8-amino-7-oxononanoate + S-adenosyl-L-methionine = S-adenosyl-4-methylsulfanyl-2-oxobutanoate + (7R,8S)-7,8-diammoniononanoate. It functions in the pathway cofactor biosynthesis; biotin biosynthesis; 7,8-diaminononanoate from 8-amino-7-oxononanoate (SAM route): step 1/1. Its function is as follows. Catalyzes the transfer of the alpha-amino group from S-adenosyl-L-methionine (SAM) to 7-keto-8-aminopelargonic acid (KAPA) to form 7,8-diaminopelargonic acid (DAPA). It is the only aminotransferase known to utilize SAM as an amino donor. The sequence is that of Adenosylmethionine-8-amino-7-oxononanoate aminotransferase from Saccharomyces cerevisiae (strain ATCC 204508 / S288c) (Baker's yeast).